A 61-amino-acid polypeptide reads, in one-letter code: MRRGGEPQCDGREFRIASSPAREREDDNETAPPQTSAAQEPLVDCFLGTVPNSCFVRCELI.

Positions 1–40 (MRRGGEPQCDGREFRIASSPAREREDDNETAPPQTSAAQE) are disordered. The span at 9 to 25 (CDGREFRIASSPARERE) shows a compositional bias: basic and acidic residues.

This is an uncharacterized protein from Caenorhabditis elegans.